A 142-amino-acid chain; its full sequence is ATP synthase epsilon chain (142 aa).

It belongs to the ATPase epsilon chain family. In terms of assembly, F-type ATPases have 2 components, CF(1) - the catalytic core - and CF(0) - the membrane proton channel. CF(1) has five subunits: alpha(3), beta(3), gamma(1), delta(1), epsilon(1). CF(0) has three main subunits: a, b and c.

It localises to the cell inner membrane. Functionally, produces ATP from ADP in the presence of a proton gradient across the membrane. The chain is ATP synthase epsilon chain from Shewanella pealeana (strain ATCC 700345 / ANG-SQ1).